A 181-amino-acid polypeptide reads, in one-letter code: MKKWRFLGIDDSFDDRKCCVVGCVTCGGYVEGFLYTEIDIDGLDATDKLISMVRRSKFREQIKCIFLPGITLGGFNLVDIQRVYRETKIPVVVVMRRKPDMEEFDSAMRNLENYELRRKIVEVAGEIHRIGDIYIQTAGLTPSEAEKLVKASLIKGNMPEPVRISHLVASAIIHGESRGKA.

It belongs to the UPF0215 family.

The chain is UPF0215 protein AF_1433 from Archaeoglobus fulgidus (strain ATCC 49558 / DSM 4304 / JCM 9628 / NBRC 100126 / VC-16).